The chain runs to 234 residues: S-adenosylmethionine synthase 1 (234 aa).

ATP-binding positions include 10 to 12 (DGK), 78 to 81 (SGRF), Asp89, 95 to 96 (RK), Ala112, Lys116, and Lys120. Asp89 is an L-methionine binding site. Lys120 is an L-methionine binding site.

Belongs to the AdoMet synthase family. As to quaternary structure, homotetramer. Mn(2+) is required as a cofactor. It depends on Mg(2+) as a cofactor. Co(2+) serves as cofactor. Requires K(+) as cofactor. As to expression, mainly in floral buds and roots.

It localises to the cytoplasm. The enzyme catalyses L-methionine + ATP + H2O = S-adenosyl-L-methionine + phosphate + diphosphate. The protein operates within amino-acid biosynthesis; S-adenosyl-L-methionine biosynthesis; S-adenosyl-L-methionine from L-methionine: step 1/1. In terms of biological role, catalyzes the formation of S-adenosylmethionine from methionine and ATP. The reaction comprises two steps that are both catalyzed by the same enzyme: formation of S-adenosylmethionine (AdoMet) and triphosphate, and subsequent hydrolysis of the triphosphate. This is S-adenosylmethionine synthase 1 (SMS-1) from Petroselinum crispum (Parsley).